We begin with the raw amino-acid sequence, 65 residues long: DNA-directed RNA polymerase subunit Rpo10 (65 aa).

C7, C10, C44, and C45 together coordinate Zn(2+).

Belongs to the archaeal Rpo10/eukaryotic RPB10 RNA polymerase subunit family. In terms of assembly, part of the RNA polymerase complex. Zn(2+) is required as a cofactor.

The protein localises to the cytoplasm. It catalyses the reaction RNA(n) + a ribonucleoside 5'-triphosphate = RNA(n+1) + diphosphate. Functionally, DNA-dependent RNA polymerase (RNAP) catalyzes the transcription of DNA into RNA using the four ribonucleoside triphosphates as substrates. The sequence is that of DNA-directed RNA polymerase subunit Rpo10 from Nanoarchaeum equitans (strain Kin4-M).